Here is a 657-residue protein sequence, read N- to C-terminus: N-acetylgalactosaminyltransferase 7 (657 aa).

The Cytoplasmic segment spans residues 1–6 (MRLKIG). The chain crosses the membrane as a helical; Signal-anchor for type II membrane protein span at residues 7-29 (FILRSLLVVGSFLGLVVLWSSLT). Residues 30-657 (PRPDDPSPLS…KWEMNNIHSV (628 aa)) are Lumenal-facing. A disordered region spans residues 31 to 65 (RPDDPSPLSRMREDRDVNDPMPNRGGNGLAPGEDR). 5 disulfides stabilise this stretch: cysteine 197-cysteine 435, cysteine 426-cysteine 507, cysteine 545-cysteine 562, cysteine 585-cysteine 600, and cysteine 625-cysteine 640. A catalytic subdomain A region spans residues 206-317 (LLTSSVVIVF…VNWYAPLVAP (112 aa)). Substrate contacts are provided by aspartate 247 and arginine 277. Positions 301 and 303 each coordinate Mn(2+). Residues 381-443 (PYRSPAMAGG…PCSRVGHIYR (63 aa)) form a catalytic subdomain B region. Tryptophan 412 provides a ligand contact to substrate. A Mn(2+)-binding site is contributed by histidine 440. Residue arginine 443 coordinates substrate. The Ricin B-type lectin domain occupies 532–652 (VDWGEIRGFE…SKTTQKWEMN (121 aa)).

Belongs to the glycosyltransferase 2 family. GalNAc-T subfamily. Requires Mn(2+) as cofactor. As to expression, widely expressed. Expressed in uterus, retina, kidney, small intestine, omentum, stomach and CNS.

Its subcellular location is the golgi apparatus membrane. The enzyme catalyses L-seryl-[protein] + UDP-N-acetyl-alpha-D-galactosamine = a 3-O-[N-acetyl-alpha-D-galactosaminyl]-L-seryl-[protein] + UDP + H(+). It catalyses the reaction L-threonyl-[protein] + UDP-N-acetyl-alpha-D-galactosamine = a 3-O-[N-acetyl-alpha-D-galactosaminyl]-L-threonyl-[protein] + UDP + H(+). The protein operates within protein modification; protein glycosylation. Its function is as follows. Glycopeptide transferase involved in O-linked oligosaccharide biosynthesis, which catalyzes the transfer of an N-acetyl-D-galactosamine residue to an already glycosylated peptide. In contrast to other proteins of the family, it does not act as a peptide transferase that transfers GalNAc onto serine or threonine residue on the protein receptor, but instead requires the prior addition of a GalNAc on a peptide before adding additional GalNAc moieties. Some peptide transferase activity is however not excluded, considering that its appropriate peptide substrate may remain unidentified. The protein is N-acetylgalactosaminyltransferase 7 (GALNT7) of Homo sapiens (Human).